A 142-amino-acid polypeptide reads, in one-letter code: Small heat shock protein IbpB (142 aa).

The region spanning 25 to 136 (GQEPQGFPPY…QPQRIAIGTT (112 aa)) is the sHSP domain.

This sequence belongs to the small heat shock protein (HSP20) family. In terms of assembly, homodimer. Forms homomultimers of about 100-150 subunits at optimal growth temperatures. Conformation changes to oligomers at high temperatures or high ionic concentrations. The decrease in size of the multimers is accompanied by an increase in chaperone activity.

The protein localises to the cytoplasm. In terms of biological role, associates with aggregated proteins, together with IbpA, to stabilize and protect them from irreversible denaturation and extensive proteolysis during heat shock and oxidative stress. Aggregated proteins bound to the IbpAB complex are more efficiently refolded and reactivated by the ATP-dependent chaperone systems ClpB and DnaK/DnaJ/GrpE. Its activity is ATP-independent. The sequence is that of Small heat shock protein IbpB from Serratia proteamaculans (strain 568).